Reading from the N-terminus, the 436-residue chain is Trigger factor (436 aa).

Positions 161 to 246 (GDQVNIDFVG…VNSVAAPQLP (86 aa)) constitute a PPIase FKBP-type domain.

This sequence belongs to the FKBP-type PPIase family. Tig subfamily.

It localises to the cytoplasm. It carries out the reaction [protein]-peptidylproline (omega=180) = [protein]-peptidylproline (omega=0). In terms of biological role, involved in protein export. Acts as a chaperone by maintaining the newly synthesized protein in an open conformation. Functions as a peptidyl-prolyl cis-trans isomerase. The polypeptide is Trigger factor (Stutzerimonas stutzeri (strain A1501) (Pseudomonas stutzeri)).